The primary structure comprises 182 residues: Endoribonuclease YbeY (182 aa).

Zn(2+) is bound by residues His-120, His-124, and His-130. The segment at 157 to 182 (RGVSFAPKPTGAGAFPSAADRDDTQN) is disordered.

This sequence belongs to the endoribonuclease YbeY family. Zn(2+) serves as cofactor.

Its subcellular location is the cytoplasm. In terms of biological role, single strand-specific metallo-endoribonuclease involved in late-stage 70S ribosome quality control and in maturation of the 3' terminus of the 16S rRNA. This is Endoribonuclease YbeY from Corynebacterium jeikeium (strain K411).